Consider the following 426-residue polypeptide: 3-phosphoshikimate 1-carboxyvinyltransferase (426 aa).

3-phosphoshikimate is bound by residues lysine 22, serine 23, and arginine 27. Phosphoenolpyruvate is bound at residue lysine 22. Glycine 96 and arginine 124 together coordinate phosphoenolpyruvate. 3-phosphoshikimate is bound by residues serine 170, serine 171, glutamine 172, serine 198, aspartate 314, asparagine 337, and lysine 341. Glutamine 172 serves as a coordination point for phosphoenolpyruvate. Aspartate 314 (proton acceptor) is an active-site residue. Phosphoenolpyruvate contacts are provided by arginine 345, arginine 387, and lysine 412.

The protein belongs to the EPSP synthase family. Monomer.

It is found in the cytoplasm. The catalysed reaction is 3-phosphoshikimate + phosphoenolpyruvate = 5-O-(1-carboxyvinyl)-3-phosphoshikimate + phosphate. Its pathway is metabolic intermediate biosynthesis; chorismate biosynthesis; chorismate from D-erythrose 4-phosphate and phosphoenolpyruvate: step 6/7. Functionally, catalyzes the transfer of the enolpyruvyl moiety of phosphoenolpyruvate (PEP) to the 5-hydroxyl of shikimate-3-phosphate (S3P) to produce enolpyruvyl shikimate-3-phosphate and inorganic phosphate. The chain is 3-phosphoshikimate 1-carboxyvinyltransferase from Shewanella oneidensis (strain ATCC 700550 / JCM 31522 / CIP 106686 / LMG 19005 / NCIMB 14063 / MR-1).